The following is a 357-amino-acid chain: MIVLGIETSCDETGVALYNTTPWGEGKPAFQGILGQGLHSQIAMHRDYGGVVPELASRDHIRRVLPLLDQSLAQSSLKLTDIDAVAFTQGPGLAGALLVGSAFAKSLAQGLNLPSIGVHHLEGHLLSPLLGQTAPQFPFIALLVSGGHTQLMKVSGIGHYELLGETLDDAAGEAFDKTAKLLGLDYPGGAAISKLAEQGRSGIFDLPKPMLHSGDLDFSFSGLKTAVLNQVKKFEEKKIAISSEIAQFHADLARSFVNAIVAVLVSKSEKALKQTGCKHLVLAGGVGANLQLRSALNEKATRNNFEVHYPPLELCTDNGVMIAFAGALRMLAKNNGSTTSGAFDIKPRWDLQSNNLV.

2 residues coordinate Fe cation: His-120 and His-124. Substrate-binding positions include 143–147 (LVSGG), Asp-176, Gly-189, and Asn-289. Asp-317 provides a ligand contact to Fe cation.

This sequence belongs to the KAE1 / TsaD family. The cofactor is Fe(2+).

The protein resides in the cytoplasm. It carries out the reaction L-threonylcarbamoyladenylate + adenosine(37) in tRNA = N(6)-L-threonylcarbamoyladenosine(37) in tRNA + AMP + H(+). Required for the formation of a threonylcarbamoyl group on adenosine at position 37 (t(6)A37) in tRNAs that read codons beginning with adenine. Is involved in the transfer of the threonylcarbamoyl moiety of threonylcarbamoyl-AMP (TC-AMP) to the N6 group of A37, together with TsaE and TsaB. TsaD likely plays a direct catalytic role in this reaction. The polypeptide is tRNA N6-adenosine threonylcarbamoyltransferase (Polynucleobacter necessarius subsp. necessarius (strain STIR1)).